The chain runs to 632 residues: LTPAQQQLLLQQAQAQAQLLAAAVQQHSASQQHSAAGATISASAATPMTQIPLSQPIQIAQDLQQLQQLQQQNLNLQQFVLVHPTTNLQPAQFIISQTPQGQQGLLQAQNLLTQLPQQSQANLLQPQPSITLTSQPTTPTRTIAATPIQTLPQSQTTPKRIDTPSLEEPSDLEELEQFAKTFKQRRIKLGFTQGDVGLAMGKLYGNDFSQTTISRFEALNLSFKNMCKLKPLLEKWLNDAENLSSDSTASSPSALNSPGLGAEGLNRRRKKRTSIETNIRVALEKSFMENQKPTSEDITLIAEQLNMEKEVIRVWFCNRRQKEKRINPPSSGGTSSSPIKAIFPSPTSLVATTPSLVTSSTATTLTVNPVLPLTSAAMTNLSLTGTTDSTSNNTATVISTAPPASSAVTSPSLSPSPSASASTSEASSASETSTTQTTSTPLPSPLGASQVMVTASGLQTAAAAALQGAAQLPANASLAAMAAAAGLNPGLMAPSQFAAGGALLSLNPGTLGGALSPALMSNSTLATIQALASSGSLPITSLDATGNLVFANAGGAPNIVTAPLFLNPQNLSLLTSNPVSLVSAAAASTGNSAPTASLHASSTSTESIQNSLFTVASASGAASTTTAASKAQ.

2 positions are modified to phosphothreonine: T157 and T163. In terms of domain architecture, POU-specific spans 167–241 (EEPSDLEELE…LLEKWLNDAE (75 aa)). The residue at position 170 (S170) is a Phosphoserine. Over residues 243–258 (LSSDSTASSPSALNSP) the composition is skewed to low complexity. The tract at residues 243–273 (LSSDSTASSPSALNSPGLGAEGLNRRRKKRT) is disordered. The segment at residues 268–327 (RRKKRTSIETNIRVALEKSFMENQKPTSEDITLIAEQLNMEKEVIRVWFCNRRQKEKRIN) is a DNA-binding region (homeobox). Residues S274 and S337 each carry the phosphoserine modification. Residues 385–448 (GTTDSTSNNT…STPLPSPLGA (64 aa)) form a disordered region. Positions 394 to 441 (TATVISTAPPASSAVTSPSLSPSPSASASTSEASSASETSTTQTTSTP) are enriched in low complexity.

Belongs to the POU transcription factor family. Class-2 subfamily. Interacts with POU2AF1; the interaction increases POU2F1 transactivation activity. Interacts with NR3C1, AR, PGR and HCFC1. In terms of processing, phosphorylated by PRKDC. Widely expressed.

It localises to the nucleus. In terms of biological role, transcription factor that binds to the octamer motif (5'-ATTTGCAT-3') and activates the promoters of the genes for some small nuclear RNAs (snRNA) and of genes such as those for histone H2B and immunoglobulins. Modulates transcription transactivation by NR3C1, AR and PGR. The polypeptide is POU domain, class 2, transcription factor 1 (Pou2f1) (Rattus norvegicus (Rat)).